A 167-amino-acid chain; its full sequence is UPF0336 protein MAP_4109 (167 aa).

The MaoC-like domain maps to 21–124 (GREQLRQFAL…RFGADIVVTK (104 aa)).

The protein belongs to the UPF0336 family.

The polypeptide is UPF0336 protein MAP_4109 (Mycolicibacterium paratuberculosis (strain ATCC BAA-968 / K-10) (Mycobacterium paratuberculosis)).